We begin with the raw amino-acid sequence, 248 residues long: Small ribosomal subunit protein uS2 (248 aa).

This sequence belongs to the universal ribosomal protein uS2 family.

The sequence is that of Small ribosomal subunit protein uS2 from Thiobacillus denitrificans (strain ATCC 25259 / T1).